Consider the following 830-residue polypeptide: Lon protease (830 aa).

Residues 20–215 (LPAVAIRDVV…LLIKILANEV (196 aa)) enclose the Lon N-terminal domain. 367 to 374 (GPPGVGKT) is an ATP binding site. One can recognise a Lon proteolytic domain in the interval 602 to 781 (ENGVGISTGL…DEIVKIAFEK (180 aa)). Active-site residues include S687 and K730. The interval 784–830 (PKSSFKKSKTAPKKESAKKAAKSKKPAVKKPAVKKTKQVKKTAKKKK) is disordered. A compositionally biased stretch (basic residues) spans 802 to 830 (KAAKSKKPAVKKPAVKKTKQVKKTAKKKK).

Belongs to the peptidase S16 family. Homohexamer. Organized in a ring with a central cavity.

Its subcellular location is the cytoplasm. The enzyme catalyses Hydrolysis of proteins in presence of ATP.. Its function is as follows. ATP-dependent serine protease that mediates the selective degradation of mutant and abnormal proteins as well as certain short-lived regulatory proteins. Required for cellular homeostasis and for survival from DNA damage and developmental changes induced by stress. Degrades polypeptides processively to yield small peptide fragments that are 5 to 10 amino acids long. Binds to DNA in a double-stranded, site-specific manner. The chain is Lon protease from Elusimicrobium minutum (strain Pei191).